We begin with the raw amino-acid sequence, 104 residues long: Pterin-4-alpha-carbinolamine dehydratase (104 aa).

Ala2 carries the post-translational modification N-acetylalanine. Residues 61–63 (DHH) and 78–81 (STHE) contribute to the substrate site.

This sequence belongs to the pterin-4-alpha-carbinolamine dehydratase family. In terms of assembly, homotetramer and homodimer. Heterotetramer with HNF1A; formed by a dimer of dimers. Interacts with HNF1B (via HNF-p1 domain); the interaction increases HNF1B transactivation activity. As to expression, mainly expressed in the liver, in pancreatic cells, and in the kidney, especially in the distal convoluted tubule, in the cortical thick ascending limb of Henle's loop and in the connecting tubule.

It localises to the cytoplasm. The protein localises to the nucleus. The catalysed reaction is (4aS,6R)-4a-hydroxy-L-erythro-5,6,7,8-tetrahydrobiopterin = (6R)-L-erythro-6,7-dihydrobiopterin + H2O. Involved in tetrahydrobiopterin biosynthesis. Seems to both prevent the formation of 7-pterins and accelerate the formation of quinonoid-BH2. Coactivator for HNF1A-dependent transcription. Regulates the dimerization of homeodomain protein HNF1A and enhances its transcriptional activity. Also acts as a coactivator for HNF1B-dependent transcription. The protein is Pterin-4-alpha-carbinolamine dehydratase (Pcbd1) of Mus musculus (Mouse).